We begin with the raw amino-acid sequence, 91 residues long: Acylphosphatase (91 aa).

One can recognise an Acylphosphatase-like domain in the interval 3–91 (CLKAVVKGKV…GNYGDFHIKY (89 aa)). Active-site residues include Arg18 and Asn36.

Belongs to the acylphosphatase family.

The enzyme catalyses an acyl phosphate + H2O = a carboxylate + phosphate + H(+). The protein is Acylphosphatase (acyP) of Dehalococcoides mccartyi (strain ATCC BAA-2266 / KCTC 15142 / 195) (Dehalococcoides ethenogenes (strain 195)).